Here is a 244-residue protein sequence, read N- to C-terminus: U11/U12 small nuclear ribonucleoprotein 35 kDa protein (244 aa).

The RRM domain occupies 51–129 (LTLFVARLNS…HEIFVDYELE (79 aa)). Positions 146 to 162 (GKKESGQLRFGGRDRPF) are enriched in basic and acidic residues. The tract at residues 146–244 (GKKESGQLRF…KTRDKRDRSK (99 aa)) is disordered. Lys172 is covalently cross-linked (Glycyl lysine isopeptide (Lys-Gly) (interchain with G-Cter in SUMO2)). 2 stretches are compositionally biased toward basic and acidic residues: residues 173–185 (NEPHREGKRERRE) and 192–244 (RHWD…DRSK).

In terms of assembly, component of the U11/U12 snRNPs that are part of the U12-type spliceosome.

It localises to the nucleus. The protein is U11/U12 small nuclear ribonucleoprotein 35 kDa protein (Snrnp35) of Rattus norvegicus (Rat).